The chain runs to 357 residues: Mannonate dehydratase (357 aa).

The protein belongs to the mannonate dehydratase family. Requires Fe(2+) as cofactor. It depends on Mn(2+) as a cofactor.

It catalyses the reaction D-mannonate = 2-dehydro-3-deoxy-D-gluconate + H2O. Its pathway is carbohydrate metabolism; pentose and glucuronate interconversion. Functionally, catalyzes the dehydration of D-mannonate. The polypeptide is Mannonate dehydratase (Sorangium cellulosum (strain So ce56) (Polyangium cellulosum (strain So ce56))).